We begin with the raw amino-acid sequence, 134 residues long: Profilin-3 (134 aa).

C13 and C118 are joined by a disulfide. Positions 84–100 match the Involved in PIP2 interaction motif; that stretch reads AVIRGKKGSGGITIKKT. T114 is modified (phosphothreonine).

This sequence belongs to the profilin family. Occurs in many kinds of cells as a complex with monomeric actin in a 1:1 ratio. Post-translationally, phosphorylated by MAP kinases.

Its subcellular location is the cytoplasm. It localises to the cytoskeleton. Binds to actin and affects the structure of the cytoskeleton. At high concentrations, profilin prevents the polymerization of actin, whereas it enhances it at low concentrations. The protein is Profilin-3 of Olea europaea (Common olive).